The sequence spans 95 residues: Aspartyl/glutamyl-tRNA(Asn/Gln) amidotransferase subunit C (95 aa).

This sequence belongs to the GatC family. Heterotrimer of A, B and C subunits.

The enzyme catalyses L-glutamyl-tRNA(Gln) + L-glutamine + ATP + H2O = L-glutaminyl-tRNA(Gln) + L-glutamate + ADP + phosphate + H(+). It catalyses the reaction L-aspartyl-tRNA(Asn) + L-glutamine + ATP + H2O = L-asparaginyl-tRNA(Asn) + L-glutamate + ADP + phosphate + 2 H(+). In terms of biological role, allows the formation of correctly charged Asn-tRNA(Asn) or Gln-tRNA(Gln) through the transamidation of misacylated Asp-tRNA(Asn) or Glu-tRNA(Gln) in organisms which lack either or both of asparaginyl-tRNA or glutaminyl-tRNA synthetases. The reaction takes place in the presence of glutamine and ATP through an activated phospho-Asp-tRNA(Asn) or phospho-Glu-tRNA(Gln). The chain is Aspartyl/glutamyl-tRNA(Asn/Gln) amidotransferase subunit C from Caldanaerobacter subterraneus subsp. tengcongensis (strain DSM 15242 / JCM 11007 / NBRC 100824 / MB4) (Thermoanaerobacter tengcongensis).